A 438-amino-acid polypeptide reads, in one-letter code: Xylose isomerase (438 aa).

Positions 306 and 308 each coordinate Mg(2+).

This sequence belongs to the xylose isomerase family. Homotetramer. It depends on Mg(2+) as a cofactor.

The protein localises to the cytoplasm. The enzyme catalyses alpha-D-xylose = alpha-D-xylulofuranose. The chain is Xylose isomerase from Caldicellulosiruptor bescii (strain ATCC BAA-1888 / DSM 6725 / KCTC 15123 / Z-1320) (Anaerocellum thermophilum).